Here is a 343-residue protein sequence, read N- to C-terminus: N-acetyl-gamma-glutamyl-phosphate reductase (343 aa).

Cys-147 is an active-site residue.

It belongs to the NAGSA dehydrogenase family. Type 1 subfamily.

The protein resides in the cytoplasm. The catalysed reaction is N-acetyl-L-glutamate 5-semialdehyde + phosphate + NADP(+) = N-acetyl-L-glutamyl 5-phosphate + NADPH + H(+). Its pathway is amino-acid biosynthesis; L-arginine biosynthesis; N(2)-acetyl-L-ornithine from L-glutamate: step 3/4. In terms of biological role, catalyzes the NADPH-dependent reduction of N-acetyl-5-glutamyl phosphate to yield N-acetyl-L-glutamate 5-semialdehyde. In Staphylococcus aureus (strain Mu3 / ATCC 700698), this protein is N-acetyl-gamma-glutamyl-phosphate reductase.